Here is a 393-residue protein sequence, read N- to C-terminus: Formate-dependent phosphoribosylglycinamide formyltransferase (393 aa).

Residues 22 to 23 and Glu82 each bind N(1)-(5-phospho-beta-D-ribosyl)glycinamide; that span reads EL. ATP contacts are provided by residues Arg114, Lys155, 160–165, 195–198, and Glu203; these read SSGKGQ and ESFV. One can recognise an ATP-grasp domain in the interval 119-308; sequence RLAAEEVGLK…EFALHVRAIL (190 aa). Mg(2+)-binding residues include Glu267 and Glu279. Residues Asp286, Lys356, and 363–364 contribute to the N(1)-(5-phospho-beta-D-ribosyl)glycinamide site; that span reads RR.

Belongs to the PurK/PurT family. In terms of assembly, homodimer.

The enzyme catalyses N(1)-(5-phospho-beta-D-ribosyl)glycinamide + formate + ATP = N(2)-formyl-N(1)-(5-phospho-beta-D-ribosyl)glycinamide + ADP + phosphate + H(+). It participates in purine metabolism; IMP biosynthesis via de novo pathway; N(2)-formyl-N(1)-(5-phospho-D-ribosyl)glycinamide from N(1)-(5-phospho-D-ribosyl)glycinamide (formate route): step 1/1. Its function is as follows. Involved in the de novo purine biosynthesis. Catalyzes the transfer of formate to 5-phospho-ribosyl-glycinamide (GAR), producing 5-phospho-ribosyl-N-formylglycinamide (FGAR). Formate is provided by PurU via hydrolysis of 10-formyl-tetrahydrofolate. This chain is Formate-dependent phosphoribosylglycinamide formyltransferase, found in Maridesulfovibrio salexigens (strain ATCC 14822 / DSM 2638 / NCIMB 8403 / VKM B-1763) (Desulfovibrio salexigens).